Consider the following 250-residue polypeptide: 5'-nucleotidase SurE (250 aa).

A divalent metal cation is bound by residues Asp8, Asp9, Ser39, and Asn91.

Belongs to the SurE nucleotidase family. The cofactor is a divalent metal cation.

It localises to the cytoplasm. It catalyses the reaction a ribonucleoside 5'-phosphate + H2O = a ribonucleoside + phosphate. Nucleotidase that shows phosphatase activity on nucleoside 5'-monophosphates. The chain is 5'-nucleotidase SurE from Leptospira borgpetersenii serovar Hardjo-bovis (strain L550).